Here is a 387-residue protein sequence, read N- to C-terminus: MTSILNTVSTIHSSRVTSVDRVGVLSLRNSDSVEFTRRRSGFSTLIYESPGRRFVVRAAETDTDKVKSQTPDKAPAGGSSINQLLGIKGASQETNKWKIRLQLTKPVTWPPLVWGVVCGAAASGNFHWTPEDVAKSILCMMMSGPCLTGYTQTINDWYDRDIDAINEPYRPIPSGAISEPEVITQVWVLLLGGLGIAGILDVWAGHTTPTVFYLALGGSLLSYIYSAPPLKLKQNGWVGNFALGASYISLPWWAGQALFGTLTPDVVVLTLLYSIAGLGIAIVNDFKSVEGDRALGLQSLPVAFGTETAKWICVGAIDITQLSVAGYLLASGKPYYALALVALIIPQIVFQFKYFLKDPVKYDVKYQASAQPFLVLGIFVTALASQH.

The transit peptide at 1 to 57 (MTSILNTVSTIHSSRVTSVDRVGVLSLRNSDSVEFTRRRSGFSTLIYESPGRRFVVR) directs the protein to the chloroplast. The segment at 62–81 (DTDKVKSQTPDKAPAGGSSI) is disordered. The next 7 helical transmembrane spans lie at 182 to 202 (VITQ…ILDV), 210 to 230 (TVFY…APPL), 241 to 261 (FALG…LFGT), 266 to 286 (VVVL…VNDF), 311 to 331 (WICV…LLAS), 336 to 356 (YALA…KYFL), and 364 to 384 (VKYQ…TALA).

It belongs to the UbiA prenyltransferase family. Chlorophyll synthase subfamily. As to expression, low level in flower buds, flowers, stems, leaves, greening cotyledons and immature siliques, but not in mature siliques or seeds.

The protein resides in the plastid. Its subcellular location is the chloroplast membrane. The enzyme catalyses phytyl diphosphate + chlorophyllide a + H(+) = chlorophyll a + diphosphate. It functions in the pathway porphyrin-containing compound metabolism; chlorophyll biosynthesis. Functionally, involved in one of the last steps of the biosynthesis of chlorophyll a. Catalyzes the esterification of chlorophillide a or b with a preference for geranylgeranyldiphosphate (GGPP) rather than for phytyldiphosphate (PhyPP). This is Chlorophyll synthase, chloroplastic (CHLG) from Arabidopsis thaliana (Mouse-ear cress).